The chain runs to 173 residues: Ribulose bisphosphate carboxylase small subunit, chloroplastic 3 (173 aa).

Residues 1–49 (MASIPATVATVAQANMVAPFTGLKSNAAFPVTKKVNDFSTLPSNGGRVQ) constitute a chloroplast transit peptide.

This sequence belongs to the RuBisCO small chain family. Heterohexadecamer of 8 large and 8 small subunits.

The protein localises to the plastid. It localises to the chloroplast. Functionally, ruBisCO catalyzes two reactions: the carboxylation of D-ribulose 1,5-bisphosphate, the primary event in carbon dioxide fixation, as well as the oxidative fragmentation of the pentose substrate. Both reactions occur simultaneously and in competition at the same active site. Although the small subunit is not catalytic it is essential for maximal activity. This chain is Ribulose bisphosphate carboxylase small subunit, chloroplastic 3, found in Flaveria pringlei.